The sequence spans 359 residues: Probable dual-specificity RNA methyltransferase RlmN (359 aa).

Glu-91 serves as the catalytic Proton acceptor. The Radical SAM core domain occupies 97 to 329 (QHYGHSVCVT…KKNGVNCVVR (233 aa)). Cys-104 and Cys-340 are disulfide-bonded. Residues Cys-111, Cys-115, and Cys-118 each contribute to the [4Fe-4S] cluster site. Residues 163–164 (GE), Ser-195, 218–220 (SLH), and Asn-296 each bind S-adenosyl-L-methionine. Cys-340 serves as the catalytic S-methylcysteine intermediate.

Belongs to the radical SAM superfamily. RlmN family. [4Fe-4S] cluster is required as a cofactor.

The protein localises to the cytoplasm. It catalyses the reaction adenosine(2503) in 23S rRNA + 2 reduced [2Fe-2S]-[ferredoxin] + 2 S-adenosyl-L-methionine = 2-methyladenosine(2503) in 23S rRNA + 5'-deoxyadenosine + L-methionine + 2 oxidized [2Fe-2S]-[ferredoxin] + S-adenosyl-L-homocysteine. The catalysed reaction is adenosine(37) in tRNA + 2 reduced [2Fe-2S]-[ferredoxin] + 2 S-adenosyl-L-methionine = 2-methyladenosine(37) in tRNA + 5'-deoxyadenosine + L-methionine + 2 oxidized [2Fe-2S]-[ferredoxin] + S-adenosyl-L-homocysteine. Functionally, specifically methylates position 2 of adenine 2503 in 23S rRNA and position 2 of adenine 37 in tRNAs. This chain is Probable dual-specificity RNA methyltransferase RlmN, found in Streptococcus pyogenes serotype M18 (strain MGAS8232).